The chain runs to 679 residues: HEAT repeat-containing protein 3 (679 aa).

The span at 1–11 shows a compositional bias: basic residues; the sequence is MGKSRTKRFKR. Positions 1–40 are disordered; the sequence is MGKSRTKRFKRPQFSPIESCQAEAAAASNGTGDEEDDGPA. Serine 15 bears the Phosphoserine mark. HEAT repeat units lie at residues 38 to 69 and 74 to 110; these read GPAAELLEKLQHPSAEVRECACAGLARLVQQR and DLARRDAVRRLGPLLLDSSLAVRETAAGALRNLSACG. Serine 144 carries the post-translational modification Phosphoserine. Threonine 339 carries the post-translational modification Phosphothreonine.

This sequence belongs to the nuclear import and ribosome assembly adapter family. Component of a hexameric 5S RNP precursor complex, composed of 5S RNA, RRS1, RPF2/BXDC1, RPL5, RPL11 and HEATR3; this complex acts as a precursor for ribosome assembly.

In terms of biological role, plays a role in ribosome biogenesis and in nuclear import of the 60S ribosomal protein L5/large ribosomal subunit protein uL18 (RPL5). Required for proper erythrocyte maturation. This Mus musculus (Mouse) protein is HEAT repeat-containing protein 3 (Heatr3).